A 170-amino-acid polypeptide reads, in one-letter code: Urease accessory protein UreE (170 aa).

It belongs to the UreE family.

The protein localises to the cytoplasm. Functionally, involved in urease metallocenter assembly. Binds nickel. Probably functions as a nickel donor during metallocenter assembly. The protein is Urease accessory protein UreE of Helicobacter pylori (strain HPAG1).